A 114-amino-acid polypeptide reads, in one-letter code: Large ribosomal subunit protein bL19 (114 aa).

Belongs to the bacterial ribosomal protein bL19 family.

Its function is as follows. This protein is located at the 30S-50S ribosomal subunit interface and may play a role in the structure and function of the aminoacyl-tRNA binding site. This Halalkalibacterium halodurans (strain ATCC BAA-125 / DSM 18197 / FERM 7344 / JCM 9153 / C-125) (Bacillus halodurans) protein is Large ribosomal subunit protein bL19.